A 502-amino-acid polypeptide reads, in one-letter code: Glycerol kinase (502 aa).

Thr-14 contacts ADP. Residues Thr-14, Thr-15, and Ser-16 each contribute to the ATP site. Position 14 (Thr-14) interacts with sn-glycerol 3-phosphate. Residue Arg-18 participates in ADP binding. Residues Arg-84, Glu-85, Tyr-136, and Asp-246 each contribute to the sn-glycerol 3-phosphate site. 5 residues coordinate glycerol: Arg-84, Glu-85, Tyr-136, Asp-246, and Gln-247. ADP contacts are provided by Thr-268 and Gly-311. Thr-268, Gly-311, Gln-315, and Gly-412 together coordinate ATP. 2 residues coordinate ADP: Gly-412 and Asn-416.

This sequence belongs to the FGGY kinase family.

The catalysed reaction is glycerol + ATP = sn-glycerol 3-phosphate + ADP + H(+). It functions in the pathway polyol metabolism; glycerol degradation via glycerol kinase pathway; sn-glycerol 3-phosphate from glycerol: step 1/1. With respect to regulation, inhibited by fructose 1,6-bisphosphate (FBP). Its function is as follows. Key enzyme in the regulation of glycerol uptake and metabolism. Catalyzes the phosphorylation of glycerol to yield sn-glycerol 3-phosphate. This chain is Glycerol kinase, found in Pasteurella multocida (strain Pm70).